Reading from the N-terminus, the 273-residue chain is Nucleotide-binding protein TT_C1664 (273 aa).

ATP is bound at residue 8–15 (GLSGAGKT). A GTP-binding site is contributed by 57–60 (DARA).

It belongs to the RapZ-like family.

In terms of biological role, displays ATPase and GTPase activities. This chain is Nucleotide-binding protein TT_C1664, found in Thermus thermophilus (strain ATCC BAA-163 / DSM 7039 / HB27).